The sequence spans 492 residues: Lysine--tRNA ligase (492 aa).

Residues Asp-395 and Glu-402 each coordinate Mg(2+).

This sequence belongs to the class-II aminoacyl-tRNA synthetase family. As to quaternary structure, homodimer. It depends on Mg(2+) as a cofactor.

The protein resides in the cytoplasm. It catalyses the reaction tRNA(Lys) + L-lysine + ATP = L-lysyl-tRNA(Lys) + AMP + diphosphate. The sequence is that of Lysine--tRNA ligase from Thermus thermophilus (strain ATCC BAA-163 / DSM 7039 / HB27).